Reading from the N-terminus, the 197-residue chain is MDFVKALLDKKLLLIGNFMLTSGKVSPYYLDLRKLPNHPDIFSFVVSSAVDIVKGINFDMILGVVTGGVPFASFIACKLNKPMGYIRAEKKGHGTERLLEADVDGKKVIVVDDVATTGGSILKAVEEVRKAGGKVEHALVIVDREEGAFEKLESVGIRLLSVYKVSEILNSLIKSNLVAENEKKLISDYMVKNIGKS.

5-phospho-alpha-D-ribose 1-diphosphate is bound by residues R87, K91, H93, and 112–120 (DDVATTGGS). Residues T116 and R144 each coordinate orotate.

This sequence belongs to the purine/pyrimidine phosphoribosyltransferase family. PyrE subfamily. As to quaternary structure, homodimer. Mg(2+) is required as a cofactor.

It carries out the reaction orotidine 5'-phosphate + diphosphate = orotate + 5-phospho-alpha-D-ribose 1-diphosphate. The protein operates within pyrimidine metabolism; UMP biosynthesis via de novo pathway; UMP from orotate: step 1/2. Catalyzes the transfer of a ribosyl phosphate group from 5-phosphoribose 1-diphosphate to orotate, leading to the formation of orotidine monophosphate (OMP). This Sulfolobus acidocaldarius (strain ATCC 33909 / DSM 639 / JCM 8929 / NBRC 15157 / NCIMB 11770) protein is Orotate phosphoribosyltransferase.